A 296-amino-acid polypeptide reads, in one-letter code: Antisense-enhancing sequence 1 (296 aa).

The active site involves Glu47.

This sequence belongs to the PhzF family.

Functionally, may have isomerase activity. Enhances target gene silencing when coexpressed with antisense RNA. The polypeptide is Antisense-enhancing sequence 1 (aes1) (Schizosaccharomyces pombe (strain 972 / ATCC 24843) (Fission yeast)).